Consider the following 118-residue polypeptide: uncharacterized protein (118 aa).

Positions 1–12 (MADDNVSFTDQG) are enriched in polar residues. Residues 1–63 (MADDNVSFTD…KKGKTKKVRK (63 aa)) are disordered. Over residues 39 to 63 (TKKKGKKNKKSKKKAKKGKTKKVRK) the composition is skewed to basic residues. The chain crosses the membrane as a helical span at residues 81–101 (FCAGIIVAMIMLFVIIIYGII).

It is found in the membrane. This is an uncharacterized protein from Caenorhabditis elegans.